An 828-amino-acid chain; its full sequence is DNA gyrase subunit A (828 aa).

In terms of domain architecture, Topo IIA-type catalytic spans 32–497; the sequence is LPDVRDGLKP…EVLSLEDEDL (466 aa). Residue Tyr-120 is the O-(5'-phospho-DNA)-tyrosine intermediate of the active site. A GyrA-box motif is present at residues 524–530; it reads QKRGGRG.

The protein belongs to the type II topoisomerase GyrA/ParC subunit family. Heterotetramer, composed of two GyrA and two GyrB chains. In the heterotetramer, GyrA contains the active site tyrosine that forms a transient covalent intermediate with DNA, while GyrB binds cofactors and catalyzes ATP hydrolysis.

The protein resides in the cytoplasm. The catalysed reaction is ATP-dependent breakage, passage and rejoining of double-stranded DNA.. A type II topoisomerase that negatively supercoils closed circular double-stranded (ds) DNA in an ATP-dependent manner to modulate DNA topology and maintain chromosomes in an underwound state. Negative supercoiling favors strand separation, and DNA replication, transcription, recombination and repair, all of which involve strand separation. Also able to catalyze the interconversion of other topological isomers of dsDNA rings, including catenanes and knotted rings. Type II topoisomerases break and join 2 DNA strands simultaneously in an ATP-dependent manner. This Streptococcus pyogenes serotype M3 (strain ATCC BAA-595 / MGAS315) protein is DNA gyrase subunit A.